Here is a 492-residue protein sequence, read N- to C-terminus: Zinc finger protein GLIS2 (492 aa).

The disordered stretch occupies residues 49–101 (VITPICSSPPPGFRYRDGDSPPFSSPPIVDLSLSPPSGTDSPSRSSLSPDRAA). Residues 69-129 (PPFSSPPIVD…SPFQFFLPLG (61 aa)) form a transcription activation region. The span at 82–97 (SPPSGTDSPSRSSLSP) shows a compositional bias: low complexity. The tract at residues 138-161 (MFMSPPKENRLSLEFTEQKQLVCQ) is transcription repression. The segment at 158-183 (LVCQWAKCNRLFELLQELVDHVNDFH) adopts a C2H2-type 1 zinc-finger fold. The C2H2-type 2; degenerate zinc finger occupies 192–219 (YCCHWEGCARRGRGFNARYKMLIHIRTH). 3 C2H2-type zinc fingers span residues 225 to 247 (HCCPTCHKSFSRLENLKIHNRSH), 253 to 277 (YMCPYEGCNKRYSNSSDRFKHTRTH), and 283 to 307 (YYCKMPGCQKRYTDPSSLRKHIKAH). Residues 423–444 (VENEKRPKGQRGDSSERTDGSK) are compositionally biased toward basic and acidic residues. Residues 423–450 (VENEKRPKGQRGDSSERTDGSKLRPGSI) are disordered.

The protein belongs to the GLI C2H2-type zinc-finger protein family.

It is found in the nucleus speckle. The protein localises to the cytoplasm. Can act either as a transcription repressor or as a transcription activator, depending on the cell context. May be involved in neuron differentiation. In Xenopus laevis (African clawed frog), this protein is Zinc finger protein GLIS2 (glis2).